The primary structure comprises 164 residues: Cyclic pyranopterin monophosphate synthase (164 aa).

Residues 75–77 and 116–117 each bind substrate; these read MCH and ME. The active site involves Asp131.

Belongs to the MoaC family. In terms of assembly, homohexamer; trimer of dimers.

It catalyses the reaction (8S)-3',8-cyclo-7,8-dihydroguanosine 5'-triphosphate = cyclic pyranopterin phosphate + diphosphate. It functions in the pathway cofactor biosynthesis; molybdopterin biosynthesis. Its function is as follows. Catalyzes the conversion of (8S)-3',8-cyclo-7,8-dihydroguanosine 5'-triphosphate to cyclic pyranopterin monophosphate (cPMP). This Staphylococcus aureus (strain USA300) protein is Cyclic pyranopterin monophosphate synthase.